The following is a 346-amino-acid chain: Cytosolic sulfotransferase 17 (346 aa).

Position 89-94 (K89–W94) interacts with 3'-phosphoadenylyl sulfate. Residue H151 is the Proton acceptor of the active site. 3'-phosphoadenylyl sulfate contacts are provided by residues R173, S181, Y239, and R309–G311.

Belongs to the sulfotransferase 1 family. As to expression, highly expressed in roots, stems and mature leaves. Low expression in young leaves and flowers. Barely detected in siliques.

It is found in the cytoplasm. The enzyme catalyses an aliphatic (Z)-desulfo-glucosinolate + 3'-phosphoadenylyl sulfate = a (Z)-omega-(methylsulfanyl)-N-sulfo-alkylhydroximate S-glucoside + adenosine 3',5'-bisphosphate + H(+). With respect to regulation, inhibited by phosphoadenosine 5'-phosphate (PAP). In terms of biological role, sulfotransferase that utilizes 3'-phospho-5'-adenylyl sulfate (PAPS) as sulfonate donor to catalyze the sulfate conjugation of desulfo-glucosinolates (dsGSs), the final step in the biosynthesis of the glucosinolate core structure. Substrate preference is desulfo-benzyl glucosinolate &gt; desulfo-6-methylthiohexyl glucosinolate. Increased specific activity with increasing chain length of desulfo-glucosinolate derived from methionine. Preferred substrate is desulfo-8-methylthiooctyl glucosinolate. The polypeptide is Cytosolic sulfotransferase 17 (SOT17) (Arabidopsis thaliana (Mouse-ear cress)).